A 382-amino-acid chain; its full sequence is Gap junction alpha-1 protein (382 aa).

Over 2 to 23 the chain is Cytoplasmic; sequence GDWSALGKLLDKVQAYSTAGGK. At Ser5 the chain carries Phosphoserine. The chain crosses the membrane as a helical span at residues 24 to 44; it reads VWLSVLFIFRILLLGTAVESA. Topologically, residues 45-76 are extracellular; it reads WGDEQSAFRCNTQQPGCENVCYDKSFPISHVR. 2 cysteine pairs are disulfide-bonded: Cys54–Cys192 and Cys187–Cys198. The chain crosses the membrane as a helical span at residues 77 to 97; the sequence is FWVLQIIFVSVPTLLYLAHVF. At 98–155 the chain is on the cytoplasmic side; it reads YVMRKEEKLNKKEEELKVAQTDGVNVEMHLKQIEIKKFKYGIEEHGKVKMRGGLLRTY. Lys144 participates in a covalent cross-link: Glycyl lysine isopeptide (Lys-Gly) (interchain with G-Cter in SUMO). A helical membrane pass occupies residues 156-176; sequence IISILFKSVFEVAFLLIQWYI. Over 177-207 the chain is Extracellular; it reads YGFSLSAVYTCKRDPCPHQVDCFLSRPTEKT. Residues 208-228 form a helical membrane-spanning segment; the sequence is IFIIFMLVVSLVSLALNIIEL. Over 229 to 382 the chain is Cytoplasmic; sequence FYVFFKGVKD…SRPRPDDLEI (154 aa). A Glycyl lysine isopeptide (Lys-Gly) (interchain with G-Cter in SUMO) cross-link involves residue Lys237. The segment at 244–382 is interaction with NOV; the sequence is SDPYHATTGP…SRPRPDDLEI (139 aa). The residue at position 247 (Tyr247) is a Phosphotyrosine. 3 positions are modified to phosphoserine: Ser255, Ser257, and Ser262. The tract at residues 264-382 is interaction with UBQLN4; that stretch reads KYAYFNGCSS…SRPRPDDLEI (119 aa). At Cys271 the chain carries S-nitrosocysteine. The residue at position 275 (Thr275) is a Phosphothreonine. A phosphoserine mark is found at Ser306 and Ser314. The span at 317 to 332 shows a compositional bias: polar residues; sequence QNRMGQAGSTISNSHA. The interval 317–382 is disordered; it reads QNRMGQAGST…SRPRPDDLEI (66 aa). Ser325 bears the Phosphoserine; by CK1 mark. Thr326 carries the phosphothreonine modification. Residues Ser328 and Ser330 each carry the phosphoserine; by CK1 modification. Phosphoserine occurs at positions 344 and 365. Positions 362–374 are enriched in low complexity; that stretch reads RPSSRASSRASSR. Ser368 carries the phosphoserine; by PKC/PRKCG and PKC/PRKCD modification. Phosphoserine is present on residues Ser369 and Ser373.

The protein belongs to the connexin family. Alpha-type (group II) subfamily. As to quaternary structure, a connexon is composed of a hexamer of connexins. Interacts with SGSM3. Interacts with RIC1/CIP150. Interacts with CNST and CSNK1D. Interacts (via C-terminus) with TJP1. Interacts (via C-terminus) with SRC (via SH3 domain). Interacts (not ubiquitinated) with UBQLN4 (via UBA domain). Interacts with NOV. Interacts with TMEM65. Interacts with ANK3/ANKG and PKP2. Phosphorylation at Ser-325, Ser-328 and Ser-330 by CK1 modulates gap junction assembly. Phosphorylated at Ser-368 by PRKCG; phosphorylation induces disassembly of gap junction plaques and inhibition of gap junction activity. Phosphorylation at Ser-368 by PRKCD triggers its internalization into small vesicles leading to proteasome-mediated degradation. Post-translationally, sumoylated with SUMO1, SUMO2 and SUMO3, which may regulate the level of functional Cx43 gap junctions at the plasma membrane. May be desumoylated by SENP1 or SENP2. In terms of processing, S-nitrosylation at Cys-271 is enriched at the muscle endothelial gap junction in arteries, it augments channel permeability and may regulate of smooth muscle cell to endothelial cell communication. Acetylated in the developing cortex; leading to delocalization from the cell membrane.

Its subcellular location is the cell membrane. The protein resides in the cell junction. The protein localises to the gap junction. It is found in the endoplasmic reticulum. Gap junction protein that acts as a regulator of bladder capacity. A gap junction consists of a cluster of closely packed pairs of transmembrane channels, the connexons, through which materials of low MW diffuse from one cell to a neighboring cell. May play a critical role in the physiology of hearing by participating in the recycling of potassium to the cochlear endolymph. Negative regulator of bladder functional capacity: acts by enhancing intercellular electrical and chemical transmission, thus sensitizing bladder muscles to cholinergic neural stimuli and causing them to contract. May play a role in cell growth inhibition through the regulation of NOV expression and localization. Plays an essential role in gap junction communication in the ventricles. This is Gap junction alpha-1 protein (GJA1) from Oryctolagus cuniculus (Rabbit).